The chain runs to 486 residues: N-succinylglutamate 5-semialdehyde dehydrogenase (486 aa).

220-225 (GSSRTG) contacts NAD(+). Residues Glu-243 and Cys-277 contribute to the active site.

Belongs to the aldehyde dehydrogenase family. AstD subfamily.

The enzyme catalyses N-succinyl-L-glutamate 5-semialdehyde + NAD(+) + H2O = N-succinyl-L-glutamate + NADH + 2 H(+). It participates in amino-acid degradation; L-arginine degradation via AST pathway; L-glutamate and succinate from L-arginine: step 4/5. Functionally, catalyzes the NAD-dependent reduction of succinylglutamate semialdehyde into succinylglutamate. This is N-succinylglutamate 5-semialdehyde dehydrogenase from Shewanella baltica (strain OS223).